A 246-amino-acid polypeptide reads, in one-letter code: 1-(5-phosphoribosyl)-5-[(5-phosphoribosylamino)methylideneamino] imidazole-4-carboxamide isomerase (246 aa).

Catalysis depends on D7, which acts as the Proton acceptor. D129 functions as the Proton donor in the catalytic mechanism.

The protein belongs to the HisA/HisF family.

It is found in the cytoplasm. It carries out the reaction 1-(5-phospho-beta-D-ribosyl)-5-[(5-phospho-beta-D-ribosylamino)methylideneamino]imidazole-4-carboxamide = 5-[(5-phospho-1-deoxy-D-ribulos-1-ylimino)methylamino]-1-(5-phospho-beta-D-ribosyl)imidazole-4-carboxamide. The protein operates within amino-acid biosynthesis; L-histidine biosynthesis; L-histidine from 5-phospho-alpha-D-ribose 1-diphosphate: step 4/9. This Shewanella sediminis (strain HAW-EB3) protein is 1-(5-phosphoribosyl)-5-[(5-phosphoribosylamino)methylideneamino] imidazole-4-carboxamide isomerase.